The chain runs to 226 residues: ATP synthase F(0) complex subunit a (226 aa).

6 consecutive transmembrane segments (helical) span residues 6–26, 68–88, 97–117, 138–158, 164–184, and 195–215; these read FAPF…IITF, WTLM…LGLL, QLSM…IMGF, IPML…ALAV, ITAG…LSSI, and ILFL…YVFT.

It belongs to the ATPase A chain family. Component of the ATP synthase complex composed at least of ATP5F1A/subunit alpha, ATP5F1B/subunit beta, ATP5MC1/subunit c (homooctomer), MT-ATP6/subunit a, MT-ATP8/subunit 8, ATP5ME/subunit e, ATP5MF/subunit f, ATP5MG/subunit g, ATP5MK/subunit k, ATP5MJ/subunit j, ATP5F1C/subunit gamma, ATP5F1D/subunit delta, ATP5F1E/subunit epsilon, ATP5PF/subunit F6, ATP5PB/subunit b, ATP5PD/subunit d, ATP5PO/subunit OSCP. ATP synthase complex consists of a soluble F(1) head domain (subunits alpha(3) and beta(3)) - the catalytic core - and a membrane F(0) domain - the membrane proton channel (subunits c, a, 8, e, f, g, k and j). These two domains are linked by a central stalk (subunits gamma, delta, and epsilon) rotating inside the F1 region and a stationary peripheral stalk (subunits F6, b, d, and OSCP). Interacts with DNAJC30; interaction is direct.

The protein localises to the mitochondrion inner membrane. The enzyme catalyses H(+)(in) = H(+)(out). Its function is as follows. Subunit a, of the mitochondrial membrane ATP synthase complex (F(1)F(0) ATP synthase or Complex V) that produces ATP from ADP in the presence of a proton gradient across the membrane which is generated by electron transport complexes of the respiratory chain. ATP synthase complex consist of a soluble F(1) head domain - the catalytic core - and a membrane F(1) domain - the membrane proton channel. These two domains are linked by a central stalk rotating inside the F(1) region and a stationary peripheral stalk. During catalysis, ATP synthesis in the catalytic domain of F(1) is coupled via a rotary mechanism of the central stalk subunits to proton translocation. With the subunit c (ATP5MC1), forms the proton-conducting channel in the F(0) domain, that contains two crucial half-channels (inlet and outlet) that facilitate proton movement from the mitochondrial intermembrane space (IMS) into the matrix. Protons are taken up via the inlet half-channel and released through the outlet half-channel, following a Grotthuss mechanism. The chain is ATP synthase F(0) complex subunit a from Didelphis virginiana (North American opossum).